The chain runs to 632 residues: Probable potassium transport system protein Kup (632 aa).

Helical transmembrane passes span Leu-19–Leu-39, Ile-59–Val-79, Leu-110–Pro-130, Pro-146–Ile-166, Phe-178–Val-198, Leu-221–Tyr-241, Trp-256–Leu-276, Met-298–Phe-318, Ile-346–Phe-366, Ala-375–Met-395, Pro-403–Ala-423, and Ile-428–Thr-448.

It belongs to the HAK/KUP transporter (TC 2.A.72) family.

The protein resides in the cell inner membrane. The catalysed reaction is K(+)(in) + H(+)(in) = K(+)(out) + H(+)(out). In terms of biological role, transport of potassium into the cell. Likely operates as a K(+):H(+) symporter. The sequence is that of Probable potassium transport system protein Kup from Cupriavidus metallidurans (strain ATCC 43123 / DSM 2839 / NBRC 102507 / CH34) (Ralstonia metallidurans).